Here is a 567-residue protein sequence, read N- to C-terminus: Low-affinity glucose transporter (567 aa).

The segment covering 1–24 (MSNQMTDSTSAGSGTEHSVDTNTA) has biased composition (polar residues). The tract at residues 1–36 (MSNQMTDSTSAGSGTEHSVDTNTALKAGSPNDLKVS) is disordered. Residues 18–62 (SVDTNTALKAGSPNDLKVSHEEDLNDLEKTAEETLQQKPAKEYIF) lie on the Cytoplasmic side of the membrane. The chain crosses the membrane as a helical span at residues 63–83 (VSLCCVMVAFGGFVFGWDTGT). Residues 84 to 113 (ISGFVNQTDFLRRFGQEKADGSHYLSNVRT) lie on the Extracellular side of the membrane. The N-linked (GlcNAc...) asparagine glycan is linked to N89. The helical transmembrane segment at 114–134 (GLIVSIFNIGCAVGGIVLSNI) threads the bilayer. The Cytoplasmic portion of the chain corresponds to 135–141 (GDRWGRR). A helical transmembrane segment spans residues 142-162 (IGLITVIIIYVIGIIIQIASV). At 163 to 167 (DKWYQ) the chain is on the extracellular side. A helical membrane pass occupies residues 168-188 (YFIGRIISGLGVGGITVLSPM). The Cytoplasmic segment spans residues 189 to 199 (LISETAPKHLR). Residues 200 to 220 (GTLVSCYQLMITFGIFLGYCT) form a helical membrane-spanning segment. The Extracellular segment spans residues 221–234 (NYGTKNYSNSVQWR). A helical membrane pass occupies residues 235 to 255 (VPLGLCFAWAIFMVLGMMFVP). Residues 256 to 334 (ESARFLVETD…MGIMIQSLQQ (79 aa)) lie on the Cytoplasmic side of the membrane. Residues 335–354 (LTGDNYFFYYGTTIFQSVGM) form a helical membrane-spanning segment. Topologically, residues 355–358 (DDSF) are extracellular. A helical transmembrane segment spans residues 359 to 379 (ETSIVLGIVNFASTFFALYTV). The Cytoplasmic portion of the chain corresponds to 380 to 386 (DHFGRRN). A helical transmembrane segment spans residues 387–407 (CLLYGCVGMVACYVVYASVGV). Topologically, residues 408-429 (TRLWPDGPDHPDISSKGAGNCM) are extracellular. Residues 430-450 (IVFACFYIFCFATTWAPIAYV) traverse the membrane as a helical segment. Residues 451 to 466 (VISESYPLRVKGKAMA) are Cytoplasmic-facing. A helical transmembrane segment spans residues 467–487 (IASASNWIWGFLIGFFTPFIT). The Extracellular segment spans residues 488 to 493 (SAIHFY). A helical membrane pass occupies residues 494–514 (YGYVFMGCMVFAFFYVYFFVP). The Cytoplasmic portion of the chain corresponds to 515 to 567 (ETKGLTLEEVNEMYSEGVLPWKSSSWVPSSRRGAEYDVDALQHDDKPWYKAML).

The protein belongs to the major facilitator superfamily. Sugar transporter (TC 2.A.1.1) family.

It is found in the membrane. Low-affinity glucose transporter. The sequence is that of Low-affinity glucose transporter (RAG1) from Kluyveromyces lactis (strain ATCC 8585 / CBS 2359 / DSM 70799 / NBRC 1267 / NRRL Y-1140 / WM37) (Yeast).